Consider the following 377-residue polypeptide: Cytochrome b (377 aa).

The next 4 helical transmembrane spans lie at F34–M54, W78–A100, T113–V133, and F179–L199. The heme b site is built by H84 and H98. Positions 183 and 197 each coordinate heme b. H202 contacts a ubiquinone. A run of 4 helical transmembrane segments spans residues F225 to L245, K288 to Y308, M323 to I343, and Q352 to W372.

Belongs to the cytochrome b family. As to quaternary structure, the main subunits of complex b-c1 are: cytochrome b, cytochrome c1 and the Rieske protein. The cofactor is heme b.

It is found in the mitochondrion inner membrane. In terms of biological role, component of the ubiquinol-cytochrome c reductase complex (complex III or cytochrome b-c1 complex) that is part of the mitochondrial respiratory chain. The b-c1 complex mediates electron transfer from ubiquinol to cytochrome c. Contributes to the generation of a proton gradient across the mitochondrial membrane that is then used for ATP synthesis. In Priapulus caudatus (Priapulid worm), this protein is Cytochrome b (mt:Cyt-b).